The sequence spans 61 residues: Large ribosomal subunit protein uL30 (61 aa).

The protein belongs to the universal ribosomal protein uL30 family. Part of the 50S ribosomal subunit.

This chain is Large ribosomal subunit protein uL30, found in Chlorobaculum parvum (strain DSM 263 / NCIMB 8327) (Chlorobium vibrioforme subsp. thiosulfatophilum).